The chain runs to 179 residues: ATP synthase subunit delta (179 aa).

This sequence belongs to the ATPase delta chain family. F-type ATPases have 2 components, F(1) - the catalytic core - and F(0) - the membrane proton channel. F(1) has five subunits: alpha(3), beta(3), gamma(1), delta(1), epsilon(1). F(0) has three main subunits: a(1), b(2) and c(10-14). The alpha and beta chains form an alternating ring which encloses part of the gamma chain. F(1) is attached to F(0) by a central stalk formed by the gamma and epsilon chains, while a peripheral stalk is formed by the delta and b chains.

It is found in the cell membrane. Its function is as follows. F(1)F(0) ATP synthase produces ATP from ADP in the presence of a proton or sodium gradient. F-type ATPases consist of two structural domains, F(1) containing the extramembraneous catalytic core and F(0) containing the membrane proton channel, linked together by a central stalk and a peripheral stalk. During catalysis, ATP synthesis in the catalytic domain of F(1) is coupled via a rotary mechanism of the central stalk subunits to proton translocation. In terms of biological role, this protein is part of the stalk that links CF(0) to CF(1). It either transmits conformational changes from CF(0) to CF(1) or is implicated in proton conduction. The polypeptide is ATP synthase subunit delta (Natranaerobius thermophilus (strain ATCC BAA-1301 / DSM 18059 / JW/NM-WN-LF)).